Consider the following 307-residue polypeptide: UDP-N-acetylenolpyruvoylglucosamine reductase (307 aa).

The region spanning 33-197 (TGGNADFYIT…LEAAFTLAPG (165 aa)) is the FAD-binding PCMH-type domain. Arg176 is a catalytic residue. The active-site Proton donor is Ser226. Glu296 is an active-site residue.

This sequence belongs to the MurB family. FAD is required as a cofactor.

The protein resides in the cytoplasm. The enzyme catalyses UDP-N-acetyl-alpha-D-muramate + NADP(+) = UDP-N-acetyl-3-O-(1-carboxyvinyl)-alpha-D-glucosamine + NADPH + H(+). It functions in the pathway cell wall biogenesis; peptidoglycan biosynthesis. In terms of biological role, cell wall formation. The protein is UDP-N-acetylenolpyruvoylglucosamine reductase of Staphylococcus aureus (strain NCTC 8325 / PS 47).